The sequence spans 211 residues: Probable nicotinate-nucleotide adenylyltransferase (211 aa).

Belongs to the NadD family.

It catalyses the reaction nicotinate beta-D-ribonucleotide + ATP + H(+) = deamido-NAD(+) + diphosphate. The protein operates within cofactor biosynthesis; NAD(+) biosynthesis; deamido-NAD(+) from nicotinate D-ribonucleotide: step 1/1. Its function is as follows. Catalyzes the reversible adenylation of nicotinate mononucleotide (NaMN) to nicotinic acid adenine dinucleotide (NaAD). The sequence is that of Probable nicotinate-nucleotide adenylyltransferase from Shewanella frigidimarina (strain NCIMB 400).